The chain runs to 627 residues: Neuronal acetylcholine receptor subunit alpha-4 (627 aa).

The N-terminal stretch at 1-26 (MELGGPGAPRLLPPLLLLLGTGLLRA) is a signal peptide. The Extracellular portion of the chain corresponds to 27–249 (SSHVETRAHA…RRLPLFYTIN (223 aa)). A glycan (N-linked (GlcNAc...) asparagine) is linked at asparagine 57. 2 residues coordinate Ca(2+): valine 76 and glutamate 78. 2 N-linked (GlcNAc...) asparagine glycosylation sites follow: asparagine 107 and asparagine 174. Disulfide bonds link cysteine 161-cysteine 175 and cysteine 225-cysteine 226. A helical transmembrane segment spans residues 250 to 269 (LIIPCLLISCLTVLVFYLPS). Cysteine 271 carries the S-palmitoyl cysteine lipid modification. Transmembrane regions (helical) follow at residues 275–291 (ITLCISVLLSLTVFLLL) and 306–330 (IGEYLLFTMIFVTLSIVITVFVLNV). The Cytoplasmic segment spans residues 331–600 (HHRSPRTHTM…WKYVAMVIDR (270 aa)). 2 disordered regions span residues 382–481 (PRFW…VEGG) and 496–561 (DDAA…LPLS). Serine 424 is modified (phosphoserine). Positions 501–511 (EADGQAAGALA) are enriched in low complexity. 2 positions are modified to phosphoserine: serine 538 and serine 541. Residues 538–548 (SSVSPSATVKT) show a composition bias toward polar residues. The helical transmembrane segment at 601 to 619 (IFLWMFIIVCLLGTVGLFL) threads the bilayer.

The protein belongs to the ligand-gated ion channel (TC 1.A.9) family. Acetylcholine receptor (TC 1.A.9.1) subfamily. Alpha-4/CHRNA4 sub-subfamily. As to quaternary structure, neuronal AChR is composed of two different types of subunits: alpha and beta. CHRNA4 forms heteropentameric neuronal acetylcholine receptors with CHRNB2 and CHRNB4, as well as CHRNA5 and CHRNB3 as accesory subunits. Found in two major stoichiometric forms, LS (low agonist sensitivity): (CHRNA4)3:(CHRNB2)2 and HS (high agonist sensitivity): (CHRNA4)2:(CHRNB2)3, the two stoichiometric forms differ in their unitary conductance, calcium permeability, ACh sensitivity and potentiation by divalent cation. Cells produce predominantly an (CHRNA4)3:(CHRNB2)2 nAChR. The (CHRNA4)2:(CHRNB2)3 expression is selectively up-regulated by nicotine and has lower single channel conductance and calcium permeability. In the striatum, also forms CHRNA4:CHRNA6:CHRNB2 complexes. Also found in the stoichiometric form: (CHRNA4:CHRNB2)2:CHRNB3. Interacts with RIC3; which is required for proper folding and assembly. Interacts with LYPD6.

Its subcellular location is the synaptic cell membrane. The protein localises to the cell membrane. The enzyme catalyses Ca(2+)(in) = Ca(2+)(out). The catalysed reaction is K(+)(in) = K(+)(out). It carries out the reaction Na(+)(in) = Na(+)(out). Its activity is regulated as follows. Activated by a myriad of ligands such as acetylcholine, cytisine, nicotine, choline and epibatidine. Channel potentiation by calcium is stoichiometry-selective, CHRNA4:CHRNB2 nACh receptor is achieved by calcium association with topographically distinct sites framed by anionic residues within the CHRNA4 subunit and between the CHRNA4 and CHRNB2 subunits. nAChR activity is inhibited by the antagonist alpha-conotoxins BuIA, PnIA, GID and MII, small disulfide-constrained peptides from cone snails. Functionally, component of neuronal acetylcholine receptors (nAChRs) that function as pentameric, ligand-gated cation channels with high calcium permeability among other activities. nAChRs are excitatory neurotrasnmitter receptors formed by a collection of nAChR subunits known to mediate synaptic transmission in the nervous system and the neuromuscular junction. Each nAchR subunit confers differential attributes to channel properties, including activation, deactivation and desensitization kinetics, pH sensitivity, cation permeability, and binding to allosteric modulators. CHRNA4 forms heteropentameric neuronal acetylcholine receptors with CHRNB2 and CHRNB4, as well as CHRNA5 and CHRNB3 as accesory subunits. Is the most abundant nAChR subtype expressed in the central nervous system. Found in two major stoichiometric forms,(CHRNA4)3:(CHRNB2)2 and (CHRNA4)2:(CHRNB2)3, the two stoichiometric forms differ in their unitary conductance, calcium permeability, ACh sensitivity and potentiation by divalent cation. Involved in the modulation of calcium-dependent signaling pathways, influences the release of neurotransmitters, including dopamine, glutamate and GABA. The protein is Neuronal acetylcholine receptor subunit alpha-4 of Homo sapiens (Human).